The sequence spans 716 residues: Polycystin-2 (716 aa).

2 stretches are compositionally biased toward basic and acidic residues: residues 1 to 10 (MNYGAADERW) and 30 to 41 (MVSEEYEHDKKK). Positions 1 to 44 (MNYGAADERWANPPQPVAAAEHGPSFDHSMVSEEYEHDKKKNPA) are disordered. The Cytoplasmic portion of the chain corresponds to 1–72 (MNYGAADERW…SDGKIKLTAR (72 aa)). The chain crosses the membrane as a helical span at residues 73–93 (SFMEVGGYAVFLIVLVYVAFA). The Extracellular segment spans residues 94–324 (QNSIQSYYYS…YQTSGGTRMM (231 aa)). N-linked (GlcNAc...) asparagine glycosylation is found at N150 and N177. C180 and C193 are disulfide-bonded. A helical transmembrane segment spans residues 325 to 345 (IFEGIFCGFILYFIFEELFAI). Over 346-355 (GRHRLHYLTQ) the chain is Cytoplasmic. A helical transmembrane segment spans residues 356 to 376 (FWNLVDVVLLGFSVATIILSV). A glycan (N-linked (GlcNAc...) asparagine) is linked at N377. The Extracellular portion of the chain corresponds to 377 to 409 (NRTKTGVNRVNSVIENGLTNAPFDDVTSSENSY). The helical transmembrane segment at 410-430 (LNIKACVVFVAWVKVFKFISV) threads the bilayer. At 431 to 447 (NKTMSQLSSTLTRSAKD) the chain is on the cytoplasmic side. A helical transmembrane segment spans residues 448–468 (IGGFAVMFAVFFFAFAQFGYL). Over 469–482 (CFGTQIADYSNLYN) the chain is Extracellular. An intramembrane region (pore-forming) is located at residues 483–497 (SAFALLRLILGDFNF). Residues 498 to 510 (SALESCNRFFGPA) are Extracellular-facing. A helical transmembrane segment spans residues 511-531 (FFIAYVFFVSFILLNMFLAII). Residues 532 to 716 (NDSYVEVKAE…ITSIADKKEE (185 aa)) lie on the Cytoplasmic side of the membrane. S534 is subject to Phosphoserine; by CK2. A coiled-coil region spans residues 613–680 (EKVAEDIADE…IEKQRVQQQD (68 aa)). The interval 696 to 716 (RNRESAARRPTITSIADKKEE) is disordered.

Belongs to the polycystin family. Post-translationally, phosphorylated. CK2 (kin-3 and kin-10) and calcineurin act antagonistically to regulate the phosphorylation state. As to expression, exclusively expressed in a subset of 3 categories of adult male sensory neurons: ray neurons, hook neurons and head cephalic (CEM) neurons. Expressed in the male tail.

The protein localises to the cell membrane. Its subcellular location is the cell projection. The protein resides in the cilium membrane. It localises to the cilium. It is found in the axon. The protein localises to the dendrite. Its subcellular location is the perikaryon. The protein resides in the endoplasmic reticulum membrane. Functions as a calcium permeable cation channel. Required for 2 aspects of male mating behavior: response to hermaphrodite contact and vulva location. Acts in the same pathway as lov-1 and atp-2 in response behavior. This is Polycystin-2 from Caenorhabditis elegans.